The chain runs to 362 residues: UDP-N-acetylglucosamine--N-acetylmuramyl-(pentapeptide) pyrophosphoryl-undecaprenol N-acetylglucosamine transferase (362 aa).

Residues T14–G16, N126, R166, S193, and Q294 contribute to the UDP-N-acetyl-alpha-D-glucosamine site.

This sequence belongs to the glycosyltransferase 28 family. MurG subfamily.

It localises to the cell inner membrane. The enzyme catalyses di-trans,octa-cis-undecaprenyl diphospho-N-acetyl-alpha-D-muramoyl-L-alanyl-D-glutamyl-meso-2,6-diaminopimeloyl-D-alanyl-D-alanine + UDP-N-acetyl-alpha-D-glucosamine = di-trans,octa-cis-undecaprenyl diphospho-[N-acetyl-alpha-D-glucosaminyl-(1-&gt;4)]-N-acetyl-alpha-D-muramoyl-L-alanyl-D-glutamyl-meso-2,6-diaminopimeloyl-D-alanyl-D-alanine + UDP + H(+). It functions in the pathway cell wall biogenesis; peptidoglycan biosynthesis. Cell wall formation. Catalyzes the transfer of a GlcNAc subunit on undecaprenyl-pyrophosphoryl-MurNAc-pentapeptide (lipid intermediate I) to form undecaprenyl-pyrophosphoryl-MurNAc-(pentapeptide)GlcNAc (lipid intermediate II). This is UDP-N-acetylglucosamine--N-acetylmuramyl-(pentapeptide) pyrophosphoryl-undecaprenol N-acetylglucosamine transferase from Paracoccus denitrificans (strain Pd 1222).